The following is a 156-amino-acid chain: 6,7-dimethyl-8-ribityllumazine synthase (156 aa).

5-amino-6-(D-ribitylamino)uracil-binding positions include Phe22, 57–59, and 81–83; these read AVE and SVI. Residue 86 to 87 participates in (2S)-2-hydroxy-3-oxobutyl phosphate binding; it reads GT. Catalysis depends on His89, which acts as the Proton donor. Residue Phe114 coordinates 5-amino-6-(D-ribitylamino)uracil. Residue Arg128 coordinates (2S)-2-hydroxy-3-oxobutyl phosphate.

It belongs to the DMRL synthase family. Forms an icosahedral capsid composed of 60 subunits, arranged as a dodecamer of pentamers.

It catalyses the reaction (2S)-2-hydroxy-3-oxobutyl phosphate + 5-amino-6-(D-ribitylamino)uracil = 6,7-dimethyl-8-(1-D-ribityl)lumazine + phosphate + 2 H2O + H(+). Its pathway is cofactor biosynthesis; riboflavin biosynthesis; riboflavin from 2-hydroxy-3-oxobutyl phosphate and 5-amino-6-(D-ribitylamino)uracil: step 1/2. Catalyzes the formation of 6,7-dimethyl-8-ribityllumazine by condensation of 5-amino-6-(D-ribitylamino)uracil with 3,4-dihydroxy-2-butanone 4-phosphate. This is the penultimate step in the biosynthesis of riboflavin. The chain is 6,7-dimethyl-8-ribityllumazine synthase from Aliivibrio salmonicida (strain LFI1238) (Vibrio salmonicida (strain LFI1238)).